A 200-amino-acid polypeptide reads, in one-letter code: Recombination protein RecR (200 aa).

The segment at 57 to 72 adopts a C4-type zinc-finger fold; sequence CQHCRTFTENSLCDIC. Residues 81–176 enclose the Toprim domain; sequence GQLCIVETPA…NITRIAHGVP (96 aa).

The protein belongs to the RecR family.

Its function is as follows. May play a role in DNA repair. It seems to be involved in an RecBC-independent recombinational process of DNA repair. It may act with RecF and RecO. The chain is Recombination protein RecR from Tolumonas auensis (strain DSM 9187 / NBRC 110442 / TA 4).